The chain runs to 409 residues: Arginine biosynthesis bifunctional protein ArgJ (409 aa).

The substrate site is built by Thr-165, Lys-191, Thr-202, Glu-282, Asn-404, and Thr-409. The active-site Nucleophile is Thr-202.

It belongs to the ArgJ family. As to quaternary structure, heterotetramer of two alpha and two beta chains.

The protein localises to the cytoplasm. The enzyme catalyses N(2)-acetyl-L-ornithine + L-glutamate = N-acetyl-L-glutamate + L-ornithine. It carries out the reaction L-glutamate + acetyl-CoA = N-acetyl-L-glutamate + CoA + H(+). The protein operates within amino-acid biosynthesis; L-arginine biosynthesis; L-ornithine and N-acetyl-L-glutamate from L-glutamate and N(2)-acetyl-L-ornithine (cyclic): step 1/1. Its pathway is amino-acid biosynthesis; L-arginine biosynthesis; N(2)-acetyl-L-ornithine from L-glutamate: step 1/4. Functionally, catalyzes two activities which are involved in the cyclic version of arginine biosynthesis: the synthesis of N-acetylglutamate from glutamate and acetyl-CoA as the acetyl donor, and of ornithine by transacetylation between N(2)-acetylornithine and glutamate. The chain is Arginine biosynthesis bifunctional protein ArgJ from Parasynechococcus marenigrum (strain WH8102).